The sequence spans 359 residues: CCAAT/enhancer-binding protein alpha (359 aa).

The interval 1–55 (MESADFYEVEPRPPMSSHLQSPPHAPSNAAFGFPRGAGPAPPPAPPAAPEPLGGI) is disordered. The segment at 1-70 (MESADFYEVE…SIDISAYIDP (70 aa)) is required to repress E2F1:TFDP1-mediated transcription, to inhibit cell cycle and to induce adipocyte differentiation. Low complexity predominate over residues 29–38 (AAFGFPRGAG). Over residues 39–49 (PAPPPAPPAAP) the composition is skewed to pro residues. Positions 54 to 72 (GICEHETSIDISAYIDPAA) are required for interaction with TRIB1. Residues 126-200 (PPGYGCAAAG…HASPAHLAAP (75 aa)) form a required to induce adipocyte differentiation region. Residue lysine 159 is modified to N6-acetyllysine; alternate. A Glycyl lysine isopeptide (Lys-Gly) (interchain with G-Cter in SUMO); alternate cross-link involves residue lysine 159. Lysine 159 is covalently cross-linked (Glycyl lysine isopeptide (Lys-Gly) (interchain with G-Cter in SUMO2); alternate). Disordered stretches follow at residues 176 to 195 (LFPYQPPPPPPPPHPHASPA) and 213 to 293 (TMHL…RERN). Positions 179-191 (YQPPPPPPPPHPH) are enriched in pro residues. The tract at residues 180–194 (QPPPPPPPPHPHASP) is required to functionally cooperate with SREBF1 in promoter activation. Serine 193 carries the phosphoserine modification. The span at 220 to 232 (HPTPPPTPVPSPH) shows a compositional bias: pro residues. Phosphothreonine; by GSK3 is present on residues threonine 222 and threonine 226. Serine 230 carries the phosphoserine; by GSK3 modification. A compositionally biased stretch (low complexity) spans 233–255 (AAPALGAAGLPGPGSALKGLAGA). Positions 240-359 (AGLPGPGSAL…SLVKAMGNCA (120 aa)) are interaction with FOXO1. A compositionally biased stretch (gly residues) spans 261–272 (TGGGGGGSGAGA). Positions 277-293 (KSVDKNSNEYRVRRERN) are enriched in basic and acidic residues. A bZIP domain is found at 283–346 (SNEYRVRRER…DTLRGIFRQL (64 aa)). A DNA-binding region spans residues 286 to 301 (YRVRRERNNIAVRKSR). A basic motif region spans residues 287–314 (RVRRERNNIAVRKSRDKAKQRNVETQQK). The segment at 318-346 (LTSDNDRLRKRVEQLSRELDTLRGIFRQL) is leucine-zipper.

The protein belongs to the bZIP family. C/EBP subfamily. In terms of assembly, binds DNA as a homodimer and as a heterodimer. Can form stable heterodimers with CEBPB, CEBPD, CEBPE and CEBPG. Interacts with PRDM16. Interacts with UBN1. Interacts with ZNF638; this interaction increases transcriptional activation. Interacts with the complex TFDP2:E2F1; the interaction prevents CEBPA binding to target gene promoters and represses its transcriptional activity. Interacts with RB1. Interacts (when phosphorylated at Ser-193) with CDK2, CDK4, E2F4 and SMARCA2. Interacts with SREBPF1. Interacts with FOXO1 (via the Fork-head domain); the interaction increases when FOXO1 is deacetylated. Interacts with SIX1. Interacts (via recognition sequence) with TRIB1. Interacts (via bZIP domain) with OVOL2 (via zinc-finger domains); the interaction inhibits the transcription factor activity of CEBPA and is required to repress adipogenesis. As to quaternary structure, interacts with TAF1A and UBTF. Interacts with TAF1A and UBTF. Interacts with NPM1. In terms of processing, sumoylated, sumoylation blocks the inhibitory effect on cell proliferation by disrupting the interaction with SMARCA2. Phosphorylation at Ser-193 is required for interaction with CDK2, CDK4 and SWI/SNF complex leading to cell cycle inhibition. Dephosphorylated at Ser-193 by protein phosphatase 2A (PP2A) through PI3K/AKT signaling pathway regulation. Phosphorylation at Thr-222 and Thr-226 by GSK3 is constitutive in adipose tissue and lung. In liver, both Thr-222 and Thr-226 are phosphorylated only during feeding but not during fasting. Phosphorylation of the GSK3 consensus sites selectively decreases transactivation activity on IRE-controlled promoters. Post-translationally, ubiquitinated by COP1 upon interaction with TRIB1. In terms of tissue distribution, isoform 2 and isoform 3 are expressed in adipose tissue and liver (at protein level).

It is found in the nucleus. The protein resides in the nucleolus. Its function is as follows. Transcription factor that coordinates proliferation arrest and the differentiation of myeloid progenitors, adipocytes, hepatocytes, and cells of the lung and the placenta. Binds directly to the consensus DNA sequence 5'-T[TG]NNGNAA[TG]-3' acting as an activator on distinct target genes. During early embryogenesis, plays essential and redundant functions with CEBPB. Essential for the transition from common myeloid progenitors (CMP) to granulocyte/monocyte progenitors (GMP). Critical for the proper development of the liver and the lung. Necessary for terminal adipocyte differentiation, is required for postnatal maintenance of systemic energy homeostasis and lipid storage. To regulate these different processes at the proper moment and tissue, interplays with other transcription factors and modulators. Down-regulates the expression of genes that maintain cells in an undifferentiated and proliferative state through E2F1 repression, which is critical for its ability to induce adipocyte and granulocyte terminal differentiation. Reciprocally E2F1 blocks adipocyte differentiation by binding to specific promoters and repressing CEBPA binding to its target gene promoters. Proliferation arrest also depends on a functional binding to SWI/SNF complex. In liver, regulates gluconeogenesis and lipogenesis through different mechanisms. To regulate gluconeogenesis, functionally cooperates with FOXO1 binding to IRE-controlled promoters and regulating the expression of target genes such as PCK1 or G6PC1. To modulate lipogenesis, interacts and transcriptionally synergizes with SREBF1 in promoter activation of specific lipogenic target genes such as ACAS2. In adipose tissue, seems to act as FOXO1 coactivator accessing to ADIPOQ promoter through FOXO1 binding sites. Functionally, can act as dominant-negative. Binds DNA and have transctivation activity, even if much less efficiently than isoform 2. Does not inhibit cell proliferation. Directly and specifically enhances ribosomal DNA transcription interacting with RNA polymerase I-specific cofactors and inducing histone acetylation. This is CCAAT/enhancer-binding protein alpha from Mus musculus (Mouse).